A 376-amino-acid chain; its full sequence is Phospho-N-acetylmuramoyl-pentapeptide-transferase (376 aa).

The next 10 helical transmembrane spans lie at 28–48 (RTIM…PWFI), 76–96 (TMGG…WADL), 100–120 (FVLA…LDDF), 135–155 (YKLI…FLLA), 179–199 (YPIE…VVAT), 211–231 (GLAI…AYIV), 252–272 (AGEL…FLWY), 279–299 (VFMG…LAVF), 307–327 (IILG…VLSF), and 353–373 (KIIV…LASM).

It belongs to the glycosyltransferase 4 family. MraY subfamily. Mg(2+) is required as a cofactor.

It is found in the cell inner membrane. The enzyme catalyses UDP-N-acetyl-alpha-D-muramoyl-L-alanyl-gamma-D-glutamyl-meso-2,6-diaminopimeloyl-D-alanyl-D-alanine + di-trans,octa-cis-undecaprenyl phosphate = di-trans,octa-cis-undecaprenyl diphospho-N-acetyl-alpha-D-muramoyl-L-alanyl-D-glutamyl-meso-2,6-diaminopimeloyl-D-alanyl-D-alanine + UMP. It participates in cell wall biogenesis; peptidoglycan biosynthesis. Its function is as follows. Catalyzes the initial step of the lipid cycle reactions in the biosynthesis of the cell wall peptidoglycan: transfers peptidoglycan precursor phospho-MurNAc-pentapeptide from UDP-MurNAc-pentapeptide onto the lipid carrier undecaprenyl phosphate, yielding undecaprenyl-pyrophosphoryl-MurNAc-pentapeptide, known as lipid I. The polypeptide is Phospho-N-acetylmuramoyl-pentapeptide-transferase (Sorangium cellulosum (strain So ce56) (Polyangium cellulosum (strain So ce56))).